The primary structure comprises 293 residues: Cep170-like protein (293 aa).

2 disordered regions span residues Pro78–Thr110 and Phe217–Glu270. The segment covering Lys227–Leu245 has biased composition (polar residues).

The protein belongs to the CEP170 family.

This is Cep170-like protein (CEP170P1) from Homo sapiens (Human).